The chain runs to 201 residues: IDLSRF-like peptide (201 aa).

Positions 1 to 28 (MVRRFCNGAVALGIALTACAAFPRAIMA) are cleaved as a signal peptide. The propeptide occupies 43-201 (SDACHPYEPF…EKLVKTGFLD (159 aa)). In terms of domain architecture, LDL-receptor class A spans 45–85 (ACHPYEPFKCPGDGLCISIQYLCDGAPDCQDGYDEDSRLCT). Cystine bridges form between C46–C60, C54–C73, and C67–C84.

As to expression, expressed in central brain, antennal and optical lobes, in gnathal, thoracic and abdominal ganglia and in the retrocerebral complex (at protein level).

It localises to the secreted. The polypeptide is IDLSRF-like peptide (Camponotus floridanus (Florida carpenter ant)).